A 349-amino-acid polypeptide reads, in one-letter code: Protein RecA (349 aa).

66 to 73 (GPESSGKT) provides a ligand contact to ATP.

Belongs to the RecA family.

The protein resides in the cytoplasm. Functionally, can catalyze the hydrolysis of ATP in the presence of single-stranded DNA, the ATP-dependent uptake of single-stranded DNA by duplex DNA, and the ATP-dependent hybridization of homologous single-stranded DNAs. It interacts with LexA causing its activation and leading to its autocatalytic cleavage. The chain is Protein RecA from Psychrobacter sp. (strain PRwf-1).